Reading from the N-terminus, the 348-residue chain is Hereditary hemochromatosis protein homolog (348 aa).

An N-terminal signal peptide occupies residues M1 to G22. The segment at R23–E114 is alpha-1. Topologically, residues R23–V306 are extracellular. N-linked (GlcNAc...) asparagine glycosylation is found at N110, N130, and N234. The tract at residues S115 to Q205 is alpha-2. 2 disulfide bridges follow: C124–C187 and C225–C282. The interval V206–W297 is alpha-3. The Ig-like C1-type domain maps to P207–T296. The connecting peptide stretch occupies residues E298 to V306. A helical membrane pass occupies residues T307 to R330. Over K331–E348 the chain is Cytoplasmic.

The protein belongs to the MHC class I family. In terms of assembly, binds TFR through the extracellular domain in a pH-dependent manner.

The protein localises to the cell membrane. In terms of biological role, binds to transferrin receptor (TFR) and reduces its affinity for iron-loaded transferrin. The chain is Hereditary hemochromatosis protein homolog (HFE) from Dicerorhinus sumatrensis (Sumatran rhinoceros).